A 242-amino-acid polypeptide reads, in one-letter code: DNA repair protein RecO (242 aa).

This sequence belongs to the RecO family.

Involved in DNA repair and RecF pathway recombination. This is DNA repair protein RecO from Bacteroides fragilis (strain ATCC 25285 / DSM 2151 / CCUG 4856 / JCM 11019 / LMG 10263 / NCTC 9343 / Onslow / VPI 2553 / EN-2).